A 620-amino-acid chain; its full sequence is Threonine--tRNA ligase (620 aa).

Positions 1-42 (MFEIAKGISNSLAKKSVGAKVDGKNVDMSYILDHDAEVEFID) constitute a TGS domain. Residues 224 to 515 (DHRKLGKELE…LIEHYAGAFP (292 aa)) are catalytic. 3 residues coordinate Zn(2+): C315, H366, and H492.

It belongs to the class-II aminoacyl-tRNA synthetase family. In terms of assembly, homodimer. Zn(2+) serves as cofactor.

The protein localises to the cytoplasm. It catalyses the reaction tRNA(Thr) + L-threonine + ATP = L-threonyl-tRNA(Thr) + AMP + diphosphate + H(+). Functionally, catalyzes the attachment of threonine to tRNA(Thr) in a two-step reaction: L-threonine is first activated by ATP to form Thr-AMP and then transferred to the acceptor end of tRNA(Thr). Also edits incorrectly charged L-seryl-tRNA(Thr). In Fusobacterium nucleatum subsp. nucleatum (strain ATCC 25586 / DSM 15643 / BCRC 10681 / CIP 101130 / JCM 8532 / KCTC 2640 / LMG 13131 / VPI 4355), this protein is Threonine--tRNA ligase.